A 176-amino-acid chain; its full sequence is Ribosome maturation factor RimM (176 aa).

The PRC barrel domain maps to 97–176 (EDEFYWRDLI…QILVDWDPDF (80 aa)).

The protein belongs to the RimM family. In terms of assembly, binds ribosomal protein uS19.

The protein localises to the cytoplasm. Functionally, an accessory protein needed during the final step in the assembly of 30S ribosomal subunit, possibly for assembly of the head region. Essential for efficient processing of 16S rRNA. May be needed both before and after RbfA during the maturation of 16S rRNA. It has affinity for free ribosomal 30S subunits but not for 70S ribosomes. This chain is Ribosome maturation factor RimM, found in Shewanella halifaxensis (strain HAW-EB4).